Here is a 191-residue protein sequence, read N- to C-terminus: Fe/S biogenesis protein NfuA (191 aa).

[4Fe-4S] cluster-binding residues include cysteine 149 and cysteine 152.

Belongs to the NfuA family. Homodimer. Requires [4Fe-4S] cluster as cofactor.

Involved in iron-sulfur cluster biogenesis. Binds a 4Fe-4S cluster, can transfer this cluster to apoproteins, and thereby intervenes in the maturation of Fe/S proteins. Could also act as a scaffold/chaperone for damaged Fe/S proteins. The protein is Fe/S biogenesis protein NfuA of Salmonella paratyphi A (strain ATCC 9150 / SARB42).